A 604-amino-acid chain; its full sequence is Elongation factor 4 (604 aa).

One can recognise a tr-type G domain in the interval 9–191; sequence DAIRNFCIIA…AVISRVPAPA (183 aa). GTP is bound by residues 21–26 and 138–141; these read DHGKST and NKID.

It belongs to the TRAFAC class translation factor GTPase superfamily. Classic translation factor GTPase family. LepA subfamily.

The protein localises to the cell inner membrane. It catalyses the reaction GTP + H2O = GDP + phosphate + H(+). Its function is as follows. Required for accurate and efficient protein synthesis under certain stress conditions. May act as a fidelity factor of the translation reaction, by catalyzing a one-codon backward translocation of tRNAs on improperly translocated ribosomes. Back-translocation proceeds from a post-translocation (POST) complex to a pre-translocation (PRE) complex, thus giving elongation factor G a second chance to translocate the tRNAs correctly. Binds to ribosomes in a GTP-dependent manner. The chain is Elongation factor 4 from Prosthecochloris aestuarii (strain DSM 271 / SK 413).